The chain runs to 449 residues: MFS-type transporter 1 (449 aa).

The segment covering 1–37 (MTHSSSNEHEKEDDRRASDDMMDRDDQNAKEEQDVSK) has biased composition (basic and acidic residues). The interval 1–43 (MTHSSSNEHEKEDDRRASDDMMDRDDQNAKEEQDVSKDAPPVN) is disordered. The next 6 membrane-spanning stretches (helical) occupy residues 61-81 (VAGG…IGIF), 97-117 (TISW…LVVG), 127-147 (YILL…SLST), 152-172 (ILLS…TPAV), 185-205 (LANG…PIMF), and 212-232 (VGFP…LIIA). N-linked (GlcNAc...) asparagine glycosylation is present at Asn-233. 6 helical membrane passes run 262-282 (LLTT…INYI), 298-318 (YLIP…GFVA), 326-346 (VHTF…LPAA), 349-369 (APII…VAIL), 390-410 (FGVL…FVAH), and 420-440 (IWTG…RISL).

Belongs to the major facilitator superfamily. Monocarboxylate porter (TC 2.A.1.13) family.

The protein resides in the cell membrane. The catalysed reaction is erythrostominone(in) = erythrostominone(out). It catalyses the reaction deoxyerythrostominone(in) = deoxyerythrostominone(out). The enzyme catalyses epierythrostominol(in) = epierythrostominol(out). It carries out the reaction deoxyerythrostominol(in) = deoxyerythrostominol(out). In terms of biological role, MFS-type transporter that mediates the secretion of the 4 major naphthoquinone derivatives produced, erythrostominone (NQ1), deoxyerythrostominone (NQ2), epierythrostominol (NQ4), and deoxyerythrostominol (NQ5), as well as of 3 newly identified naphthoquinone derivatives termed NQ7, NQ8 and NQ9. In Ophiocordyceps sp. (strain BCC 1869) (Entomopathogenic fungus), this protein is MFS-type transporter 1.